We begin with the raw amino-acid sequence, 196 residues long: Chromophore lyase CpcS/CpeS 2 (196 aa).

The protein belongs to the CpcS/CpeS biliprotein lyase family.

Covalently attaches a chromophore to Cys residue(s) of phycobiliproteins. The polypeptide is Chromophore lyase CpcS/CpeS 2 (Trichodesmium erythraeum (strain IMS101)).